The chain runs to 308 residues: uncharacterized protein (308 aa).

Polar residues-rich tracts occupy residues 138–148 and 205–229; these read WSFTKHGSNTP and STSH…QPPS. 2 disordered regions span residues 138–157 and 205–235; these read WSFT…PLCN and STSH…TDAS.

Its subcellular location is the cytoplasm. This is an uncharacterized protein from Schizosaccharomyces pombe (strain 972 / ATCC 24843) (Fission yeast).